A 509-amino-acid chain; its full sequence is Zinc finger CCCH-type with G patch domain-containing protein (509 aa).

The C3H1-type zinc-finger motif lies at 155 to 178; the sequence is PCNYYLEGECRFDEIRCRYSHGAL. The interval 254–277 is disordered; the sequence is EDELTSEDSSSSPHDESSDEIDSD. The region spanning 310-356 is the G-patch domain; the sequence is TRGIGSKLMEKMGYIHGTGLGSEGRGIVTPVSAQILPQGRSLDACME. Positions 407–430 are disordered; that stretch reads LGGGESRHQGDQAAKKAKTNDLQQ. Over residues 411–420 the composition is skewed to basic and acidic residues; the sequence is ESRHQGDQAA.

It is found in the nucleus. Its function is as follows. Transcription repressor. In Drosophila pseudoobscura pseudoobscura (Fruit fly), this protein is Zinc finger CCCH-type with G patch domain-containing protein.